The primary structure comprises 739 residues: Nuclear pore complex protein NUP62 (739 aa).

Tandem repeats lie at residues 6–7 (FG), 17–18 (FG), 50–51 (FG), 52–53 (FG), 68–69 (FG), 70–71 (FG), 78–79 (FG), 80–81 (FG), 91–92 (FG), 93–94 (FG), 108–109 (FG), 110–111 (FG), 124–125 (FG), 141–142 (FG), 159–160 (FG), 174–175 (FG), 186–187 (FG), 207–208 (FG), and 221–222 (FG). A 26 X 2 AA repeats of F-G region spans residues 6 to 450 (FGQSNSVGGF…AATFSTTGFG (445 aa)). Residues 18–67 (GSSSATNSSSASSTTSPLSFSFNQSSNPSSTGFGFGSSVSSTPASSTTPS) form a disordered region. The span at 79-218 (GFGSSASSST…ASSSAATSTS (140 aa)) shows a compositional bias: low complexity. The disordered stretch occupies residues 79–245 (GFGSSASSST…VASSAPGSSS (167 aa)). Over residues 232 to 245 (PSFSVASSAPGSSS) the composition is skewed to low complexity. 5 consecutive repeat copies span residues 248-249 (FG), 271-272 (FG), 280-281 (FG), 308-309 (FG), and 366-367 (FG). Disordered regions lie at residues 281–329 (GSSS…ASPF), 341–366 (TASSTTSSTTPSAPPQTASSSSSFSF), and 399–418 (TTTSSSTPAATSAPASSAPA). 2 consecutive repeat copies span residues 426-427 (FG) and 449-450 (FG). The segment at 471–533 (KTSTPASSSQ…AVAPVAGSPK (63 aa)) is disordered. Residues 472 to 519 (TSTPASSSQPQTTSPAFSFSLPSSTSTTAPATSSATTTQTTLVVPSSS) show a composition bias toward low complexity. Positions 584–674 (RLEIEVAKVV…IRSIIQSVNA (91 aa)) form a coiled coil.

It belongs to the nucleoporin NSP1/NUP62 family. As to quaternary structure, part of the nuclear pore complex (NPC). The NPC has an eight-fold symmetrical structure comprising a central transport channel and two rings, the cytoplasmic and nuclear rings, to which eight filaments are attached. The cytoplasmic filaments have loose ends, while the nuclear filaments are joined in a distal ring, forming a nuclear basket. NPCs are highly dynamic in configuration and composition, and can be devided in 3 subcomplexes, the NUP62 subcomplex, the NUP107-160 subcomplex and the NUP93 subcomplex, containing approximately 30 different nucleoporin proteins. Interacts with NUP58 and the importin KPNB1.

It localises to the nucleus envelope. The protein localises to the nucleus. Its subcellular location is the nuclear pore complex. The chain is Nuclear pore complex protein NUP62 from Arabidopsis thaliana (Mouse-ear cress).